The chain runs to 320 residues: Alpha/beta hydrolase domain-containing protein 17C (320 aa).

The segment at 50–75 is disordered; it reads RAPAPAATPAPAPAAQPAPAEEGAGP. Over residues 55 to 65 the composition is skewed to pro residues; the sequence is AATPAPAPAAQ. Catalysis depends on charge relay system residues S202, D267, and H296.

It belongs to the AB hydrolase superfamily. ABHD17 family. Post-translationally, palmitoylated on cysteine residues located in a cysteine cluster at the N-terminus which promotes membrane localization. Palmitoylation is required for post-synaptic localization and for depalmitoylating activity towards DLG4/PSD95.

The protein localises to the recycling endosome membrane. The protein resides in the cell projection. It localises to the dendritic spine. It is found in the postsynaptic density membrane. The catalysed reaction is S-hexadecanoyl-L-cysteinyl-[protein] + H2O = L-cysteinyl-[protein] + hexadecanoate + H(+). In terms of biological role, hydrolyzes fatty acids from S-acylated cysteine residues in proteins. Has depalmitoylating activity towards DLG4/PSD95. The protein is Alpha/beta hydrolase domain-containing protein 17C of Mus musculus (Mouse).